Consider the following 323-residue polypeptide: Thiamine-monophosphate kinase (323 aa).

Residues aspartate 30, serine 45, threonine 46, and aspartate 47 each contribute to the Mg(2+) site. Histidine 54 is a binding site for substrate. Mg(2+) contacts are provided by aspartate 75 and aspartate 122. ATP-binding positions include 121–122 (GD) and arginine 146. Position 212 (aspartate 212) interacts with Mg(2+). Residue serine 214 participates in ATP binding. Aspartate 215 is a Mg(2+) binding site. Glutamate 263 and phenylalanine 319 together coordinate substrate.

It belongs to the thiamine-monophosphate kinase family.

It carries out the reaction thiamine phosphate + ATP = thiamine diphosphate + ADP. The protein operates within cofactor biosynthesis; thiamine diphosphate biosynthesis; thiamine diphosphate from thiamine phosphate: step 1/1. Its function is as follows. Catalyzes the ATP-dependent phosphorylation of thiamine-monophosphate (TMP) to form thiamine-pyrophosphate (TPP), the active form of vitamin B1. The polypeptide is Thiamine-monophosphate kinase (Buchnera aphidicola subsp. Schizaphis graminum (strain Sg)).